The sequence spans 2507 residues: Highly reducing polyketide synthase lcsB (2507 aa).

The 392-residue stretch at Ala2–Ser393 folds into the Ketosynthase family 3 (KS3) domain. The disordered stretch occupies residues Asn399–Glu501. Composition is skewed to polar residues over residues Ser405 to Pro414 and Asn470 to Thr488. The malonyl-CoA:ACP transacylase (MAT) domain stretch occupies residues Trp581–Lys900. Residues His953–Ala1080 form an N-terminal hotdog fold region. Positions His953 to Asp1232 are dehydratase (DH) domain. The PKS/mFAS DH domain maps to His953 to Glu1234. Catalysis depends on His984, which acts as the Proton acceptor; for dehydratase activity. Positions Ala1092–Glu1234 are C-terminal hotdog fold. Asp1151 acts as the Proton donor; for dehydratase activity in catalysis. Residues Leu1402–Pro1570 form a methyltransferase (CMet) domain region. The segment at Gly1793–Val2105 is enoyl reductase (ER) (ER) domain. Residues Ser2130–Gly2303 are ketoreductase (KR) domain. A Carrier domain is found at Glu2425–Leu2503. Ser2463 bears the O-(pantetheine 4'-phosphoryl)serine mark.

The protein operates within secondary metabolite biosynthesis. In terms of biological role, highly reducing polyketide synthase; part of the gene cluster that mediates the biosynthesis of the lipopeptide antibiotics leucinostatins that show extensive biological activities, including antimalarial, antiviral, antibacterial, antifungal, and antitumor activities, as well as phytotoxic. Leucinostatin A contains nine amino acid residues, including the unusual amino acid 4-methyl-L-proline (MePro), 2-amino-6-hydroxy-4-methyl-8-oxodecanoic acid (AHyMeOA), 3-hydroxyleucine (HyLeu), alpha-aminoisobutyric acid (AIB), beta-Ala, a 4-methylhex-2-enoic acid at the N-terminus as well as a N1,N1-dimethylpropane-1,2-diamine (DPD) at the C-terminus. The biosynthesis of leucinostatins is probably initiated with the assembly of 4-methylhex-2-enoic acid by a reducing PKS. Two reducing polyketide synthases, lcsB and lcsC, have been identified in the cluster and it is not clear which is the one that assembles 4-methylhex-2-enoic acid since both contain KS, AT, DH, cMT, ER, KR and ACP domains. The polyketide residue might be transferred to the NRPS lcsA, mediated by two additional enzymes, the acyl-CoA ligase lcsD and the thioesterase lcsE. The linear polyketide carboxylic acid, which is released from PKS, is converted to a CoA thioester by lcsD, and then lcsE hydrolyzes the thiol bond and shuttles the polyketide intermediate to lcsA. The C domain of the first module catalyzed the condensation of 4-methylhex-2-enoic acid and MePro carried by domain A1, followed by successive condensations of nine amino acids to trigger the elongation of the linear peptide. A5 and A6 domains of lcsA are proposed to incorporate leucine, A2 AHyMeOA, and A3 incorporates HyLeu. A4, A7 and A8 incorporate AIB. The AHyMeOA in leucinostatin A activated by the A2 might be produced by the second PKS (lcsB or lcsC) present within the cluster. The MePro is probably produced via leucine cyclization and may originate from a separate pathway, independent of the cluster. Another nonproteinogenic amino acid, beta-Ala, could be produced by an aspartic acid decarboxylase also localized outside of the cluster. Two candidates are VFPBJ_01400 and VFPBJ_10476. The final peptide scaffold may be released by the NAD(P)H-dependent thioester reductase (TE) at the C-terminal region of lcsA. Transamination of the lcsA product by the transaminase lcsP may produce DPD at the C-terminus. Further hydroxylation steps performed alternatively by the cytochrome P450 monooxygenases lcsI, lcsK andr lcsN then yield the non-methylated leucinostatins precursor. It is also possible that leucines can be hydroxylated prior to their incorporation into the peptide. Varying extents of methylation then lead to the formation of leucinostatins A and B. This chain is Highly reducing polyketide synthase lcsB, found in Purpureocillium lilacinum (Paecilomyces lilacinus).